Consider the following 499-residue polypeptide: Ribose import ATP-binding protein RbsA (499 aa).

ABC transporter domains lie at 3-240 and 250-494; these read VEMT…VGRA and LTPG…TGGD. 35–42 is an ATP binding site; the sequence is GENGAGKS.

This sequence belongs to the ABC transporter superfamily. Ribose importer (TC 3.A.1.2.1) family. In terms of assembly, the complex is composed of an ATP-binding protein (RbsA), two transmembrane proteins (RbsC) and a solute-binding protein (RbsB).

The protein localises to the cell membrane. It carries out the reaction D-ribose(out) + ATP + H2O = D-ribose(in) + ADP + phosphate + H(+). Its function is as follows. Part of the ABC transporter complex RbsABC involved in ribose import. Responsible for energy coupling to the transport system. This chain is Ribose import ATP-binding protein RbsA, found in Halalkalibacterium halodurans (strain ATCC BAA-125 / DSM 18197 / FERM 7344 / JCM 9153 / C-125) (Bacillus halodurans).